Consider the following 330-residue polypeptide: Aspartate--ammonia ligase (330 aa).

Belongs to the class-II aminoacyl-tRNA synthetase family. AsnA subfamily.

The protein localises to the cytoplasm. The enzyme catalyses L-aspartate + NH4(+) + ATP = L-asparagine + AMP + diphosphate + H(+). It participates in amino-acid biosynthesis; L-asparagine biosynthesis; L-asparagine from L-aspartate (ammonia route): step 1/1. This chain is Aspartate--ammonia ligase, found in Streptococcus pneumoniae serotype 19F (strain G54).